A 78-amino-acid polypeptide reads, in one-letter code: Pigment-dispersing hormone 1 peptides (78 aa).

A signal peptide spans 1–22; sequence MRSSVIVAVLVVVALAALLTQG. Ala-75 is modified (alanine amide).

Belongs to the arthropod PDH family. In terms of tissue distribution, eyestalk sinus gland.

The protein resides in the secreted. Functionally, the pigment-dispersing hormone causes the migration of the distal retinal pigment into the proximal end of the pigment chromatophore cells and thus decreases the amount of light entering the retinulas. May also function as a neurotransmitter and/or neuromodulator. This chain is Pigment-dispersing hormone 1 peptides (PDH1), found in Callinectes sapidus (Blue crab).